Reading from the N-terminus, the 58-residue chain is Large ribosomal subunit protein uL30 (58 aa).

Belongs to the universal ribosomal protein uL30 family. Part of the 50S ribosomal subunit.

In Pseudomonas entomophila (strain L48), this protein is Large ribosomal subunit protein uL30.